Reading from the N-terminus, the 85-residue chain is MKADIHPDYHPVLFRDLASGKVILTRSTATSSKTETWEDGDEYPIIEVEISSESHPFYTGKQRIMDSAGRVERFNQRFANFGKSK.

This sequence belongs to the bacterial ribosomal protein bL31 family. Type B subfamily. In terms of assembly, part of the 50S ribosomal subunit.

This chain is Large ribosomal subunit protein bL31B, found in Kocuria rhizophila (strain ATCC 9341 / DSM 348 / NBRC 103217 / DC2201).